The chain runs to 139 residues: Probable disulfide formation protein C (139 aa).

The chain crosses the membrane as a helical span at residues 8 to 27 (EYALLTAWGASFIATLGSLY). Cysteines 37 and 40 form a disulfide. 2 helical membrane-spanning segments follow: residues 42 to 61 (YQRI…VAKK) and 68 to 85 (YSLP…YHYA). Cys-99 and Cys-104 are oxidised to a cystine. A helical transmembrane segment spans residues 113 to 135 (GFVTIPFLALIGFITIAVCSFIV).

The protein belongs to the DsbB family. BdbC subfamily.

The protein resides in the cell membrane. Its function is as follows. Required for disulfide bond formation in some proteins. The polypeptide is Probable disulfide formation protein C (Bacillus cereus (strain ATCC 14579 / DSM 31 / CCUG 7414 / JCM 2152 / NBRC 15305 / NCIMB 9373 / NCTC 2599 / NRRL B-3711)).